The chain runs to 1374 residues: DNA-directed RNA polymerase subunit beta' (1374 aa).

C71, C73, C86, and C89 together coordinate Zn(2+). The Mg(2+) site is built by D462, D464, and D466. Zn(2+) contacts are provided by C810, C884, C891, and C894.

The protein belongs to the RNA polymerase beta' chain family. In terms of assembly, the RNAP catalytic core consists of 2 alpha, 1 beta, 1 beta' and 1 omega subunit. When a sigma factor is associated with the core the holoenzyme is formed, which can initiate transcription. It depends on Mg(2+) as a cofactor. Zn(2+) serves as cofactor.

The enzyme catalyses RNA(n) + a ribonucleoside 5'-triphosphate = RNA(n+1) + diphosphate. Functionally, DNA-dependent RNA polymerase catalyzes the transcription of DNA into RNA using the four ribonucleoside triphosphates as substrates. The protein is DNA-directed RNA polymerase subunit beta' of Rickettsia massiliae (strain Mtu5).